A 461-amino-acid chain; its full sequence is GTPase Der (461 aa).

2 consecutive EngA-type G domains span residues 9-171 (KTIA…DLNQ) and 200-371 (IQVG…ECFS). GTP is bound by residues 15-22 (GQPNVGKS), 62-66 (DTGGM), 123-126 (NKID), 206-213 (GRVNVGKS), 253-257 (DTAGI), and 317-320 (NKWD). One can recognise a KH-like domain in the interval 372–456 (KRIPTSLLNS…PLILNAKDKK (85 aa)).

The protein belongs to the TRAFAC class TrmE-Era-EngA-EngB-Septin-like GTPase superfamily. EngA (Der) GTPase family. In terms of assembly, associates with the 50S ribosomal subunit.

Functionally, GTPase that plays an essential role in the late steps of ribosome biogenesis. The polypeptide is GTPase Der (Helicobacter pylori (strain Shi470)).